The primary structure comprises 167 residues: Gem-associated protein 6 (167 aa).

The Sm domain occupies 7–74 (KGPLEWQDYI…VQTVETMNEG (68 aa)). Residues 69-167 (ETMNEGDHRV…LIEGHLTASQ (99 aa)) enclose the AD domain. A phosphoserine mark is found at Ser-95 and Ser-166.

In terms of assembly, part of the core SMN complex that contains SMN1, GEMIN2/SIP1, DDX20/GEMIN3, GEMIN4, GEMIN5, GEMIN6, GEMIN7, GEMIN8 and STRAP/UNRIP. Part of the SMN-Sm complex that contains SMN1, GEMIN2/SIP1, DDX20/GEMIN3, GEMIN4, GEMIN5, GEMIN6, GEMIN7, GEMIN8, STRAP/UNRIP and the Sm proteins SNRPB, SNRPD1, SNRPD2, SNRPD3, SNRPE, SNRPF and SNRPG. Interacts with GEMIN7; the interaction is direct. Interacts with GEMIN8; the interaction is direct. Interacts with SNRPB, SNRPD2, SNRPD3 and SNRPE; the interaction is direct.

The protein resides in the nucleus. The protein localises to the nucleoplasm. Its subcellular location is the gem. It localises to the cytoplasm. Functionally, the SMN complex catalyzes the assembly of small nuclear ribonucleoproteins (snRNPs), the building blocks of the spliceosome, and thereby plays an important role in the splicing of cellular pre-mRNAs. Most spliceosomal snRNPs contain a common set of Sm proteins SNRPB, SNRPD1, SNRPD2, SNRPD3, SNRPE, SNRPF and SNRPG that assemble in a heptameric protein ring on the Sm site of the small nuclear RNA to form the core snRNP (Sm core). In the cytosol, the Sm proteins SNRPD1, SNRPD2, SNRPE, SNRPF and SNRPG are trapped in an inactive 6S pICln-Sm complex by the chaperone CLNS1A that controls the assembly of the core snRNP. To assemble core snRNPs, the SMN complex accepts the trapped 5Sm proteins from CLNS1A forming an intermediate. Binding of snRNA inside 5Sm triggers eviction of the SMN complex, thereby allowing binding of SNRPD3 and SNRPB to complete assembly of the core snRNP. This is Gem-associated protein 6 (GEMIN6) from Homo sapiens (Human).